Here is a 112-residue protein sequence, read N- to C-terminus: Urease subunit gamma (112 aa).

Belongs to the urease gamma subunit family. Heterotrimer of UreA (gamma), UreB (beta) and UreC (alpha) subunits. Three heterotrimers associate to form the active enzyme.

It is found in the cytoplasm. It carries out the reaction urea + 2 H2O + H(+) = hydrogencarbonate + 2 NH4(+). The protein operates within nitrogen metabolism; urea degradation; CO(2) and NH(3) from urea (urease route): step 1/1. The chain is Urease subunit gamma from Gloeothece citriformis (strain PCC 7424) (Cyanothece sp. (strain PCC 7424)).